A 375-amino-acid polypeptide reads, in one-letter code: MKYELIKKQGRARRGQLQFDRGTVETPAFMPVGTYGTVKGMTPEEVKGTGAEILLGNTFHLWLRPGQEIMKLHGDLHDFMNWKGPILTDSGGFQVFSLGKTRKITEEGVHFRSPVNGDKIFMDAEKSMQIQYDLGSDVVMIFDECTPYPATHDEARISMERSIRWAERSRNEFDRQENPNALFGIVQGGVYEDLRDVSVEALTKIGFDGYAVGGLAVGEPKEDMHRILEHTCPQLPEDKPRYLMGVGKPEDLVEGVRRGIDMFDCVMPTRNARNGHLFVTGGVIKIRNAKHKTDTTPLDPECDCYTCQNYSKSYLHHLDRCNEILGARLNTIHNLRYYQRIMASIRKALEEDRFEQFVEEFYARRDREVPPLKDL.

Catalysis depends on aspartate 89, which acts as the Proton acceptor. Residues 89 to 93, aspartate 143, glutamine 187, and glycine 214 contribute to the substrate site; that span reads DSGGF. The RNA binding stretch occupies residues 245–251; the sequence is GVGKPED. Residue aspartate 264 is the Nucleophile of the active site. Residues 269–273 form an RNA binding; important for wobble base 34 recognition region; the sequence is TRNAR. Zn(2+)-binding residues include cysteine 302, cysteine 304, cysteine 307, and histidine 333.

The protein belongs to the queuine tRNA-ribosyltransferase family. As to quaternary structure, homodimer. Within each dimer, one monomer is responsible for RNA recognition and catalysis, while the other monomer binds to the replacement base PreQ1. It depends on Zn(2+) as a cofactor.

It carries out the reaction 7-aminomethyl-7-carbaguanine + guanosine(34) in tRNA = 7-aminomethyl-7-carbaguanosine(34) in tRNA + guanine. The protein operates within tRNA modification; tRNA-queuosine biosynthesis. Catalyzes the base-exchange of a guanine (G) residue with the queuine precursor 7-aminomethyl-7-deazaguanine (PreQ1) at position 34 (anticodon wobble position) in tRNAs with GU(N) anticodons (tRNA-Asp, -Asn, -His and -Tyr). Catalysis occurs through a double-displacement mechanism. The nucleophile active site attacks the C1' of nucleotide 34 to detach the guanine base from the RNA, forming a covalent enzyme-RNA intermediate. The proton acceptor active site deprotonates the incoming PreQ1, allowing a nucleophilic attack on the C1' of the ribose to form the product. After dissociation, two additional enzymatic reactions on the tRNA convert PreQ1 to queuine (Q), resulting in the hypermodified nucleoside queuosine (7-(((4,5-cis-dihydroxy-2-cyclopenten-1-yl)amino)methyl)-7-deazaguanosine). The polypeptide is Queuine tRNA-ribosyltransferase (Aliivibrio fischeri (strain ATCC 700601 / ES114) (Vibrio fischeri)).